The sequence spans 181 residues: TATA-box-binding protein (181 aa).

2 tandem repeats follow at residues Ile7–Leu83 and Val98–Leu173.

It belongs to the TBP family.

General factor that plays a role in the activation of archaeal genes transcribed by RNA polymerase. Binds specifically to the TATA box promoter element which lies close to the position of transcription initiation. This Methanococcus maripaludis (strain C7 / ATCC BAA-1331) protein is TATA-box-binding protein.